The following is a 514-amino-acid chain: ATP synthase subunit alpha (514 aa).

An ATP-binding site is contributed by 170-177 (GDRQIGKT).

It belongs to the ATPase alpha/beta chains family. F-type ATPases have 2 components, CF(1) - the catalytic core - and CF(0) - the membrane proton channel. CF(1) has five subunits: alpha(3), beta(3), gamma(1), delta(1), epsilon(1). CF(0) has three main subunits: a(1), b(2) and c(9-12). The alpha and beta chains form an alternating ring which encloses part of the gamma chain. CF(1) is attached to CF(0) by a central stalk formed by the gamma and epsilon chains, while a peripheral stalk is formed by the delta and b chains.

The protein resides in the cell inner membrane. It carries out the reaction ATP + H2O + 4 H(+)(in) = ADP + phosphate + 5 H(+)(out). Its function is as follows. Produces ATP from ADP in the presence of a proton gradient across the membrane. The alpha chain is a regulatory subunit. The protein is ATP synthase subunit alpha of Pseudomonas fluorescens (strain SBW25).